The sequence spans 1318 residues: Ubiquitin carboxyl-terminal hydrolase 19 (1318 aa).

Residues 1 to 109 form a disordered region; that stretch reads MSGGASATGP…GACEDPHDLL (109 aa). Over 1–1291 the chain is Cytoplasmic; sequence MSGGASATGP…TTPDEGCLRY (1291 aa). A compositionally biased stretch (basic and acidic residues) spans 28–44; the sequence is DRANQESKDGDPRKETG. Residues 83–94 are compositionally biased toward polar residues; it reads PSSSGSASTPQE. Over residues 95 to 107 the composition is skewed to basic and acidic residues; that stretch reads EQTKEGACEDPHD. Residues 113–202 form the CS 1 domain; the sequence is TPELLLDWRQ…VPMLTWPSLL (90 aa). The tract at residues 234–255 is disordered; that stretch reads KAVPPGNDPVSPAMVRSRNPGK. Ser244 carries the post-translational modification Phosphoserine. Positions 282-384 constitute a CS 2 domain; the sequence is LAFVKNDSYE…RQSQRWGGLE (103 aa). A disordered region spans residues 390 to 479; that stretch reads VGGAKVAVPT…PMPHSPVSGD (90 aa). 2 stretches are compositionally biased toward basic and acidic residues: residues 420–436 and 447–457; these read EEAR…RSED and PMEHVTPKPET. Residues 497-1214 enclose the USP domain; that stretch reads TGLVNLGNTC…YAYVLFYRRR (718 aa). Catalysis depends on Cys506, which acts as the Nucleophile. The Zn(2+) site is built by Cys791, Cys794, Cys808, Cys811, Cys817, Cys821, His829, and Cys833. The MYND-type zinc finger occupies 791 to 833; that stretch reads CAACQRKQQSEDEKLKRCTRCYRVGYCNQLCQKTHWPDHKGLC. His1165 serves as the catalytic Proton acceptor. Residues 1218–1232 are compositionally biased toward basic and acidic residues; sequence VERPPRAGHSEHHPD. Residues 1218 to 1239 are disordered; that stretch reads VERPPRAGHSEHHPDLGPAAEA. Residues 1292-1312 form a helical membrane-spanning segment; that stretch reads FVLGTVAALVALVLNVFYPLV. Residues 1313–1318 lie on the Lumenal side of the membrane; the sequence is SQSRWR.

The protein belongs to the peptidase C19 family. In terms of assembly, interacts with RNF123. Interacts with BIRC2/c-IAP1, BIRC3/c-IAP2 and XIAP/BIRC4. Interacts with HIF1A (via N-terminus). Interacts (via N-terminus) with HSP90AA1; this interaction activates the deubiquitinase activity of USP19.

The protein localises to the endoplasmic reticulum membrane. It catalyses the reaction Thiol-dependent hydrolysis of ester, thioester, amide, peptide and isopeptide bonds formed by the C-terminal Gly of ubiquitin (a 76-residue protein attached to proteins as an intracellular targeting signal).. Deubiquitinating enzyme that regulates the degradation of various proteins by removing ubiquitin moieties, thereby preventing their proteasomal degradation. Stabilizes RNF123, which promotes CDKN1B degradation and contributes to cell proliferation. Decreases the levels of ubiquitinated proteins during skeletal muscle formation and acts to repress myogenesis. Modulates transcription of major myofibrillar proteins. Also involved in turnover of endoplasmic-reticulum-associated degradation (ERAD) substrates. Mechanistically, deubiquitinates and thereby stabilizes several E3 ligases involved in the ERAD pathway including SYVN1 or MARCHF6. Regulates the stability of other E3 ligases including BIRC2/c-IAP1 and BIRC3/c-IAP2 by preventing their ubiquitination. Required for cells to mount an appropriate response to hypoxia by rescuing HIF1A from degradation in a non-catalytic manner and by mediating the deubiquitination of FUNDC1. Attenuates mitochondrial damage and ferroptosis by targeting and stabilizing NADPH oxidase 4/NOX4. Negatively regulates TNF-alpha- and IL-1beta-triggered NF-kappa-B activation by hydrolyzing 'Lys-27'- and 'Lys-63'-linked polyubiquitin chains from MAP3K7. Modulates also the protein level and aggregation of polyQ-expanded huntingtin/HTT through HSP90AA1. The protein is Ubiquitin carboxyl-terminal hydrolase 19 (USP19) of Homo sapiens (Human).